The following is a 768-amino-acid chain: Polyadenylate-binding protein, cytoplasmic and nuclear (768 aa).

The segment covering Met-1–Val-11 has biased composition (polar residues). A disordered region spans residues Met-1 to Pro-52. Low complexity predominate over residues Ala-39–Pro-52. RRM domains follow at residues Ala-55–Arg-133, Gly-143–Ala-220, Thr-236–Lys-314, and Val-340–Arg-470. 3 disordered regions span residues Asp-374–Pro-428, Gln-633–Pro-662, and Lys-739–Ser-768. The segment covering Gly-637–Gln-646 has biased composition (gly residues). Residues Pro-662–Lys-739 form the PABC domain. Over residues Asn-753–Ser-768 the composition is skewed to basic and acidic residues.

It belongs to the polyadenylate-binding protein type-1 family.

It localises to the cytoplasm. The protein localises to the nucleus. In terms of biological role, binds the poly(A) tail of mRNA. Appears to be an important mediator of the multiple roles of the poly(A) tail in mRNA biogenesis, stability and translation. In the nucleus, involved in both mRNA cleavage and polyadenylation. Is also required for efficient mRNA export to the cytoplasm. Acts in concert with a poly(A)-specific nuclease (PAN) to affect poly(A) tail shortening, which may occur concomitantly with either nucleocytoplasmic mRNA transport or translational initiation. In the cytoplasm, stimulates translation initiation and regulates mRNA decay through translation termination-coupled poly(A) shortening, probably mediated by PAN. This is Polyadenylate-binding protein, cytoplasmic and nuclear (PAB1) from Coccidioides immitis (strain RS) (Valley fever fungus).